The chain runs to 275 residues: MRKVLRVKKNIKIARIVPLVLLLVACGRGEVTAQSSSGWDQLVYLFARAIQWLSFDGSIGVGIILFTLTIRLMLMPLFNMQIKSSQKMQDIQPELRELQKKYAGKDTQTRMKLAEESQALYKKYGVNPYASLLPLLIQMPVMIALFQALTRVSFLKTGTFLWVELAQHDHLYLLPVLAAVFTFLSTWLTNLATKEKNVMMTVMIYVMPLMIFFMGFNLASGVVLYWTVSNAFQVVQLLLLNNPFKIIAERQRLANEEKERRLRERRARKKAMKRK.

A signal peptide spans 1–25 (MRKVLRVKKNIKIARIVPLVLLLVA). Cys-26 carries the N-palmitoyl cysteine lipid modification. A lipid anchor (S-diacylglycerol cysteine) is attached at Cys-26. The next 5 helical transmembrane spans lie at 58–78 (SIGV…MPLF), 129–149 (YASL…FQAL), 171–191 (LYLL…LTNL), 198–216 (VMMT…FMGF), and 222–240 (VVLY…LLLL).

It belongs to the OXA1/ALB3/YidC family. Type 2 subfamily.

The protein localises to the cell membrane. Functionally, required for the insertion and/or proper folding and/or complex formation of integral membrane proteins into the membrane. Involved in integration of membrane proteins that insert both dependently and independently of the Sec translocase complex, as well as at least some lipoproteins. The polypeptide is Membrane protein insertase YidC 1 (Streptococcus pyogenes serotype M6 (strain ATCC BAA-946 / MGAS10394)).